The chain runs to 200 residues: Urease accessory protein UreG (200 aa).

GTP is bound at residue Gly-8–Thr-15.

This sequence belongs to the SIMIBI class G3E GTPase family. UreG subfamily. Homodimer. UreH, UreF and UreG form a complex that acts as a GTP-hydrolysis-dependent molecular chaperone, activating the urease apoprotein by helping to assemble the nickel containing metallocenter of UreC. The UreE protein probably delivers the nickel.

The protein resides in the cytoplasm. Facilitates the functional incorporation of the urease nickel metallocenter. This process requires GTP hydrolysis, probably effectuated by UreG. The sequence is that of Urease accessory protein UreG from Helicobacter hepaticus (strain ATCC 51449 / 3B1).